The chain runs to 158 residues: Transcription elongation factor GreA (158 aa).

Residues 47-68 (AEYDAAKEAQGLLELKIKKMEE) are a coiled coil.

It belongs to the GreA/GreB family.

Functionally, necessary for efficient RNA polymerase transcription elongation past template-encoded arresting sites. The arresting sites in DNA have the property of trapping a certain fraction of elongating RNA polymerases that pass through, resulting in locked ternary complexes. Cleavage of the nascent transcript by cleavage factors such as GreA or GreB allows the resumption of elongation from the new 3'terminus. GreA releases sequences of 2 to 3 nucleotides. This chain is Transcription elongation factor GreA, found in Flavobacterium psychrophilum (strain ATCC 49511 / DSM 21280 / CIP 103535 / JIP02/86).